The sequence spans 377 residues: Queuine tRNA-ribosyltransferase (377 aa).

Aspartate 89 acts as the Proton acceptor in catalysis. Residues 89-93, aspartate 143, glutamine 188, and glycine 215 contribute to the substrate site; that span reads DSGGF. Residues 246-252 are RNA binding; the sequence is GVGKPED. Aspartate 265 serves as the catalytic Nucleophile. The interval 270-274 is RNA binding; important for wobble base 34 recognition; the sequence is TRNAR. Positions 303, 305, 308, and 334 each coordinate Zn(2+).

The protein belongs to the queuine tRNA-ribosyltransferase family. As to quaternary structure, homodimer. Within each dimer, one monomer is responsible for RNA recognition and catalysis, while the other monomer binds to the replacement base PreQ1. The cofactor is Zn(2+).

It carries out the reaction 7-aminomethyl-7-carbaguanine + guanosine(34) in tRNA = 7-aminomethyl-7-carbaguanosine(34) in tRNA + guanine. Its pathway is tRNA modification; tRNA-queuosine biosynthesis. Catalyzes the base-exchange of a guanine (G) residue with the queuine precursor 7-aminomethyl-7-deazaguanine (PreQ1) at position 34 (anticodon wobble position) in tRNAs with GU(N) anticodons (tRNA-Asp, -Asn, -His and -Tyr). Catalysis occurs through a double-displacement mechanism. The nucleophile active site attacks the C1' of nucleotide 34 to detach the guanine base from the RNA, forming a covalent enzyme-RNA intermediate. The proton acceptor active site deprotonates the incoming PreQ1, allowing a nucleophilic attack on the C1' of the ribose to form the product. After dissociation, two additional enzymatic reactions on the tRNA convert PreQ1 to queuine (Q), resulting in the hypermodified nucleoside queuosine (7-(((4,5-cis-dihydroxy-2-cyclopenten-1-yl)amino)methyl)-7-deazaguanosine). The polypeptide is Queuine tRNA-ribosyltransferase (Acinetobacter baumannii (strain ACICU)).